The following is a 220-amino-acid chain: Fructose-6-phosphate aldolase (220 aa).

Catalysis depends on Lys-85, which acts as the Schiff-base intermediate with substrate.

This sequence belongs to the transaldolase family. Type 3A subfamily. Homodecamer.

The protein localises to the cytoplasm. The catalysed reaction is beta-D-fructose 6-phosphate = dihydroxyacetone + D-glyceraldehyde 3-phosphate. In terms of biological role, catalyzes the reversible formation of fructose 6-phosphate from dihydroxyacetone and D-glyceraldehyde 3-phosphate via an aldolization reaction. In Salmonella agona (strain SL483), this protein is Fructose-6-phosphate aldolase.